An 84-amino-acid polypeptide reads, in one-letter code: MSHQCYLTGKKTMVVNAVIRRGKARREGGVGRKTTGITKRVQKANLHKKLIRENGVLKRVWLSAAALRTLNKGPYQGVELACRC.

Belongs to the bacterial ribosomal protein bL28 family.

The polypeptide is Large ribosomal subunit protein bL28 (Deinococcus geothermalis (strain DSM 11300 / CIP 105573 / AG-3a)).